The following is a 417-amino-acid chain: Alpha-ionylideneethane synthase aba3 (417 aa).

This sequence belongs to the alpha-ionylideneethane synthase family.

It participates in hormone biosynthesis. Alpha-ionylideneethane synthase; part of the gene cluster that mediates the biosynthesis of abscisic acid (ABA), a phytohormone that acts antagonistically toward salicylic acid (SA), jasmonic acid (JA) and ethylene (ETH) signaling, to impede plant defense responses. The first step of the pathway catalyzes the reaction from farnesyl diphosphate to alpha-ionylideneethane performed by the alpha-ionylideneethane synthase aba3 via a three-step reaction mechanism involving 2 neutral intermediates, beta-farnesene and allofarnesene. The cytochrome P450 monooxygenase aba1 might then be involved in the conversion of alpha-ionylideneethane to alpha-ionylideneacetic acid. Alpha-ionylideneacetic acid is further converted to abscisic acid in 2 steps involving the cytochrome P450 monooxygenase aba2 and the short-chain dehydrogenase/reductase aba4, via the intermediates 1'-deoxy-ABA or 1',4'-trans-diol-ABA, depending on the order of action of these 2 enzymes. Aba2 is responsible for the hydroxylation of carbon atom C-1' and aba4 might be involved in the oxidation of the C-4' carbon atom. This Botryotinia fuckeliana (Noble rot fungus) protein is Alpha-ionylideneethane synthase aba3.